The sequence spans 82 residues: RNA-binding protein Hfq (82 aa).

One can recognise a Sm domain in the interval 11 to 71 (DTFLNSVRKS…ISTIMPAQPV (61 aa)).

It belongs to the Hfq family. In terms of assembly, homohexamer.

Functionally, RNA chaperone that binds small regulatory RNA (sRNAs) and mRNAs to facilitate mRNA translational regulation in response to envelope stress, environmental stress and changes in metabolite concentrations. Also binds with high specificity to tRNAs. The protein is RNA-binding protein Hfq of Caulobacter sp. (strain K31).